The chain runs to 427 residues: Chaperone SurA (427 aa).

The first 19 residues, 1 to 19, serve as a signal peptide directing secretion; sequence MKIWKSILFTTLLSCGAVA. PpiC domains are found at residues 170–268 and 277–377; these read TVQY…KIED and VTEV…EVLD.

It is found in the periplasm. It catalyses the reaction [protein]-peptidylproline (omega=180) = [protein]-peptidylproline (omega=0). Its function is as follows. Chaperone involved in the correct folding and assembly of outer membrane proteins. Recognizes specific patterns of aromatic residues and the orientation of their side chains, which are found more frequently in integral outer membrane proteins. May act in both early periplasmic and late outer membrane-associated steps of protein maturation. This chain is Chaperone SurA, found in Vibrio parahaemolyticus serotype O3:K6 (strain RIMD 2210633).